The sequence spans 147 residues: Cyanate hydratase (147 aa).

Residues R88, E91, and S114 contribute to the active site.

The protein belongs to the cyanase family.

The catalysed reaction is cyanate + hydrogencarbonate + 3 H(+) = NH4(+) + 2 CO2. Its function is as follows. Catalyzes the reaction of cyanate with bicarbonate to produce ammonia and carbon dioxide. In Parasynechococcus marenigrum (strain WH8102), this protein is Cyanate hydratase.